Reading from the N-terminus, the 207-residue chain is Large ribosomal subunit protein uL4 (207 aa).

The disordered stretch occupies residues 58–85 (AGSGKKPFKQKGTGQARQGCRRAPQYPG).

Belongs to the universal ribosomal protein uL4 family. In terms of assembly, part of the 50S ribosomal subunit.

In terms of biological role, one of the primary rRNA binding proteins, this protein initially binds near the 5'-end of the 23S rRNA. It is important during the early stages of 50S assembly. It makes multiple contacts with different domains of the 23S rRNA in the assembled 50S subunit and ribosome. Its function is as follows. Forms part of the polypeptide exit tunnel. This is Large ribosomal subunit protein uL4 from Geotalea uraniireducens (strain Rf4) (Geobacter uraniireducens).